Consider the following 1082-residue polypeptide: Neisserial autotransporter lipoprotein NalP (1082 aa).

The signal sequence occupies residues 1–27 (MRTTPTFPTKTFKPTAMALAVATTLSA). Cys28 carries the N-palmitoyl cysteine lipid modification. A lipid anchor (S-diacylglycerol cysteine) is attached at Cys28. In terms of domain architecture, Peptidase S8 spans 110-482 (NDAYKNLINL…WGLLDAGKAM (373 aa)). Residues Asp138, His210, and Ser426 each act as charge relay system in the active site. The Autotransporter domain occupies 808-1082 (DGLDHNGTGL…SGRVGVGYRF (275 aa)).

This sequence belongs to the peptidase S8 family. Post-translationally, probably auto-processes to yield a 68-70 kDa form and a C-terminal 30 kDa translocator domain; upon overexpression in situ and in E.coli full-length protein is seen as well as (probably) auto-processed forms of 68-70 kDa and 30 kDa in size, suggesting this may have protease activity.

It localises to the cell outer membrane. It is found in the cell surface. The protein resides in the secreted. Its subcellular location is the host cytoplasm. The protein localises to the host perinuclear region. Cleavage of host complement factor C3 is inhibited by PMSF. Its function is as follows. Major human immunogenic protein, detected in patients recovering from meningitidis. Autotransporter with a secreted protease domain involved in processing other autotransporter proteins including App, IgA, LbpB and NHBA. Probably autoprocesses to release the about 70 kDa passenger domain. Both cell surface protein (Neisserial autotransporter lipoprotein NalP) and the passenger domain cleave human (host) complement factor C3, generating a shorter alpha chain and a longer beta chain than normal. Uptake of a passenger domain fragment (residues 101-784) by human cells increases cell metabolic activity; the serine protease activity is required for this increase. Cleaves human (host) complement factor C3, generating a shorter alpha chain and a longer beta chain than normal. Does not act on mouse or rabbit C3. Cleavage causes C3b degradation by human CFI and CFH, and thus decreases deposition of C3b on the bacteria surface and probably facilitates complement escape. Functionally, plays a role in extracellular-DNA (eDNA) mediated biofilm formation. In some strains (including cc32 strain MC58) eDNA stimulates biofilm formation. When NalP is not expressed (and no longer processes NHBA or IgA) biofilm formation increases. This Neisseria meningitidis serogroup B (strain ATCC BAA-335 / MC58) protein is Neisserial autotransporter lipoprotein NalP.